The primary structure comprises 429 residues: MKKKPFYKVLYVQVIFAIIVGVILGHFYPALATDMKPLGDGFIKLIKMVIGPIIFCTVVTGIAGMEDMKKVGRVGGKALLYFEVVSTFALLLGLAATHILRPGVGFNIDPATLDGKAVASYAAKAHGQSTVDFLLHIIPNTMVDAFAQGEILQILLIALLFGSVLAHLGERGKVVTDFIDGLTRVLFGIVHIVTKLAPIGAFGAMAFTIGKYGVGSLVPLLKLIGTFYLTSIVFVLVVLGTIARVTGFSIIRFVSYIKEELLIVLGTSSSEAALPQLMEKLEKAGCSRSVVGLVVPTGYSFNLDGTNIYMTMAVLFIAQATNIELTWMQQLTLLAVAMLTSKGASGVTGAGFITLAATLAVVPTIPLSGMVLILGIDRFMSECRALTNIVGNGVATVVVSAWEKELDRNKLRQALAGGGEVKTTEAAGV.

8 helical membrane-spanning segments follow: residues 9–29, 45–65, 79–99, 149–169, 185–205, 223–243, 308–328, and 356–376; these read VLYVQVIFAIIVGVILGHFYP, LIKMVIGPIIFCTVVTGIAGM, LLYFEVVSTFALLLGLAATHI, GEILQILLIALLFGSVLAHLG, VLFGIVHIVTKLAPIGAFGAM, LIGTFYLTSIVFVLVVLGTIA, IYMTMAVLFIAQATNIELTWM, and AATLAVVPTIPLSGMVLILGI.

The protein belongs to the dicarboxylate/amino acid:cation symporter (DAACS) (TC 2.A.23) family.

It is found in the cell inner membrane. Its function is as follows. Responsible for the transport of dicarboxylates such as succinate, fumarate, and malate from the periplasm across the membrane. The polypeptide is C4-dicarboxylate transport protein (Burkholderia ambifaria (strain MC40-6)).